A 588-amino-acid polypeptide reads, in one-letter code: L-fucose isomerase (588 aa).

Residues Glu335 and Asp359 each act as proton acceptor in the active site. Residues Glu335, Asp359, and His525 each coordinate Mn(2+).

Belongs to the L-fucose isomerase family. It depends on Mn(2+) as a cofactor.

The protein resides in the cytoplasm. The catalysed reaction is L-fucose = L-fuculose. It participates in carbohydrate degradation; L-fucose degradation; L-lactaldehyde and glycerone phosphate from L-fucose: step 1/3. Its function is as follows. Converts the aldose L-fucose into the corresponding ketose L-fuculose. The protein is L-fucose isomerase of Streptococcus pneumoniae serotype 4 (strain ATCC BAA-334 / TIGR4).